A 1863-amino-acid chain; its full sequence is Transient receptor potential cation channel subfamily M member 7 (1863 aa).

The residue at position 1 (M1) is an N-acetylmethionine. The Cytoplasmic portion of the chain corresponds to M1–H850. At S101 the chain carries Phosphoserine. A compositionally biased stretch (low complexity) spans N544–T555. The interval N544–K574 is disordered. The span at K560 to E573 shows a compositional bias: basic and acidic residues. Residues A851–V876 traverse the membrane as a helical segment. The Extracellular segment spans residues K877–P882. The chain crosses the membrane as a helical span at residues S883–V904. Residues F905–Y923 are Cytoplasmic-facing. Residues F924–F943 form a helical membrane-spanning segment. The Extracellular segment spans residues G944 to H956. The helical transmembrane segment at V957–L980 threads the bilayer. Topologically, residues A981–N999 are cytoplasmic. A helical membrane pass occupies residues M1000–Y1023. Residues P1024–H1025 are Extracellular-facing. Positions E1026–C1066 form an intramembrane region, pore-forming. At G1067–G1069 the chain is on the extracellular side. A helical transmembrane segment spans residues T1070–N1098. At V1099–L1863 the chain is on the cytoplasmic side. Residues C1143, C1144, and C1146 are each lipidated (S-palmitoyl cysteine). T1163 is subject to Phosphothreonine. A phosphoserine mark is found at S1191, S1193, S1224, S1255, and S1258. Residues R1198 to T1250 are a coiled coil. T1265 bears the Phosphothreonine mark. Phosphoserine occurs at positions 1300, 1357, 1360, 1385, 1386, 1389, 1394, 1395, and 1403. Residues N1380 to T1418 form a disordered region. Low complexity predominate over residues S1385–P1397. A compositionally biased stretch (polar residues) spans T1398–C1410. Phosphothreonine is present on T1404. A phosphoserine mark is found at S1406 and S1445. T1454 carries the post-translational modification Phosphothreonine. S1455 bears the Phosphoserine mark. 2 positions are modified to phosphothreonine: T1466 and T1470. A phosphoserine mark is found at S1491, S1498, S1502, S1511, S1525, and S1531. Residues S1498–L1539 are disordered. Over residues W1519 to P1530 the composition is skewed to basic and acidic residues. Residue T1535 is modified to Phosphothreonine. Residue S1541 is modified to Phosphoserine. At T1549 the chain carries Phosphothreonine. Residues S1565 and S1567 each carry the phosphoserine modification. A Phosphothreonine modification is found at T1581. The region spanning I1592 to L1822 is the Alpha-type protein kinase domain. Phosphoserine is present on residues S1596 and S1613. The ADP site is built by G1619, G1620, L1621, R1622, and K1646. Phosphoserine is present on S1658. T1683 is subject to Phosphothreonine. The ADP site is built by E1718, E1719, and M1721. H1751 contributes to the Zn(2+) binding site. Catalysis depends on D1765, which acts as the Proton acceptor. D1775 lines the ADP pocket. Position 1777 is a phosphoserine (S1777). Zn(2+)-binding residues include H1808, C1810, and C1814. The residue at position 1828 (T1828) is a Phosphothreonine. The interval E1838–L1863 is disordered. Over residues D1841–L1863 the composition is skewed to polar residues. A phosphoserine mark is found at S1846, S1849, and S1858.

This sequence in the C-terminal section; belongs to the protein kinase superfamily. Alpha-type protein kinase family. ALPK subfamily. It in the N-terminal section; belongs to the transient receptor (TC 1.A.4) family. LTrpC subfamily. TRPM7 sub-subfamily. In terms of assembly, homodimer. Homotetramer. Forms heteromers with TRPM6; heteromeric channels are functionally different from the homomeric channels. Interacts with PLCB1. Zn(2+) is required as a cofactor. Palmitoylated; palmitoylation at Cys-1143, Cys-1144 and Cys-1146 promotes TRPM7 trafficking from the Golgi to the surface membrane. Post-translationally, autophosphorylated; autophosphorylation regulates TRPM7 kinase activity towards its substrates. In terms of processing, the C-terminal kinase domain can be cleaved from the channel segment in a cell-type-specific fashion. TRPM7 is cleaved by caspase-8, dissociating the kinase from the ion-conducting pore. The cleaved kinase fragments (M7CKs) can translocate to the cell nucleus and binds chromatin-remodeling complex proteins in a Zn(2+)-dependent manner to ultimately phosphorylate specific Ser/Thr residues of histones. Found to be expressed in brain and skeletal muscle, with stronger signals in kidney, heart, liver and spleen.

It is found in the cell membrane. The protein resides in the cytoplasmic vesicle membrane. It localises to the nucleus. The enzyme catalyses L-seryl-[protein] + ATP = O-phospho-L-seryl-[protein] + ADP + H(+). It catalyses the reaction L-threonyl-[protein] + ATP = O-phospho-L-threonyl-[protein] + ADP + H(+). The catalysed reaction is Mg(2+)(in) = Mg(2+)(out). It carries out the reaction Ca(2+)(in) = Ca(2+)(out). The enzyme catalyses Zn(2+)(in) = Zn(2+)(out). With respect to regulation, channel displays constitutive activity. Channel activity is negatively regulated by cytosolic Mg(2+), Mg-ATP and low intracellular pH. Resting free cytosolic Mg(2+) and Mg-ATP concentrations seem to be sufficient to block native TRPM7 channel activity. TRPM7 channel activity is highly dependent on membrane levels of phosphatidylinositol 4,5 bisphosphate (PIP2). PIP2 hydrolysis negatively regulates TRPM7 channel activity. TRPM7 kinase activity does not affect channel activity. The kinase activity is controlled through the autophosphorylation of a serine/threonine-rich region located N-terminal to the catalytic domain. Functionally, bifunctional protein that combines an ion channel with an intrinsic kinase domain, enabling it to modulate cellular functions either by conducting ions through the pore or by phosphorylating downstream proteins via its kinase domain. The channel is highly permeable to divalent cations, specifically calcium (Ca2+), magnesium (Mg2+) and zinc (Zn2+) and mediates their influx. Controls a wide range of biological processes such as Ca2(+), Mg(2+) and Zn(2+) homeostasis, vesicular Zn(2+) release channel and intracellular Ca(2+) signaling, embryonic development, immune responses, cell motility, proliferation and differentiation. The C-terminal alpha-kinase domain autophosphorylates cytoplasmic residues of TRPM7. TRPM7 phosphorylates SMAD2, suggesting that TRPM7 kinase may play a role in activating SMAD signaling pathways. In vitro, TRPM7 kinase phosphorylates ANXA1 (annexin A1), myosin II isoforms and a variety of proteins with diverse cellular functions. Its function is as follows. The cleaved channel exhibits substantially higher current and potentiates Fas receptor signaling. In terms of biological role, the C-terminal kinase domain can be cleaved from the channel segment in a cell-type-specific fashion. In immune cells, the TRPM7 kinase domain is clipped from the channel domain by caspases in response to Fas-receptor stimulation. The cleaved kinase fragments can translocate to the nucleus, and bind chromatin-remodeling complex proteins in a Zn(2+)-dependent manner to ultimately phosphorylate specific Ser/Thr residues of histones known to be functionally important for cell differentiation and embryonic development. The sequence is that of Transient receptor potential cation channel subfamily M member 7 (Trpm7) from Mus musculus (Mouse).